Reading from the N-terminus, the 245-residue chain is Complement C1q subcomponent subunit A (245 aa).

An N-terminal signal peptide occupies residues 1–22 (MEGPRGWLVLCVLAISLASMVT). Basic and acidic residues predominate over residues 27 to 38 (RAPDGKKGEAGR). The tract at residues 27 to 114 (RAPDGKKGEA…SPGNIKDQPR (88 aa)) is disordered. Positions 31-109 (GKKGEAGRPG…KGTKGSPGNI (79 aa)) constitute a Collagen-like domain. Lysine 33 carries the post-translational modification 5-hydroxylysine. Lysine 33 carries an O-linked (Gal...) hydroxylysine glycan. 4-hydroxyproline is present on residues proline 39 and proline 45. Lysine 48 carries the post-translational modification 5-hydroxylysine. Residue lysine 48 is glycosylated (O-linked (Gal...) hydroxylysine). 2 positions are modified to 4-hydroxyproline: proline 54 and proline 57. 5-hydroxylysine is present on lysine 67. An O-linked (Gal...) hydroxylysine glycan is attached at lysine 67. Proline 73, proline 79, and proline 85 each carry 4-hydroxyproline. 5-hydroxylysine is present on lysine 100. O-linked (Gal...) hydroxylysine glycosylation is present at lysine 100. One can recognise a C1q domain in the interval 110–245 (KDQPRPAFSA…FSGFLIFPSA (136 aa)). An N-linked (GlcNAc...) asparagine glycan is attached at asparagine 146. A disulfide bond links cysteine 172 and cysteine 190. A Ca(2+)-binding site is contributed by glutamine 199.

As to quaternary structure, core component of the complement C1 complex, a calcium-dependent complex composed of 1 molecule of the C1Q subcomplex, 2 molecules of C1R and 2 molecules of C1S. The C1Q subcomplex is composed 18 subunits: 3 chains of C1QA, C1QB, and C1QC trimerize to form 6 collagen-like triple helices connected to six globular ligand-recognition modules (C1q domain). Interacts with CR1 (via Sushi 24 and Sushi 25 domains). Interacts (via C-terminus) with CD33; this interaction activates CD33 inhibitory motifs. In terms of assembly, (Microbial infection) Interacts with Staphylococcus aureus protein Cna; this interaction results in the inhibition of the classical complement pathway. In terms of processing, O-linked glycans are assumed to be the Glc-Gal disaccharides typically found as secondary modifications of hydroxylated lysines in collagen-like domains.

It localises to the secreted. Its subcellular location is the cell surface. With respect to regulation, the C1Q subcomplex is inhibited by sulfated molecules, such as triterpenoid sulfates, heparan sulfate, or chondroitin sulfates. Its function is as follows. Core component of the complement C1 complex, a multiprotein complex that initiates the classical pathway of the complement system, a cascade of proteins that leads to phagocytosis and breakdown of pathogens and signaling that strengthens the adaptive immune system. The classical complement pathway is initiated by the C1Q subcomplex of the C1 complex, which specifically binds IgG or IgM immunoglobulins complexed with antigens, forming antigen-antibody complexes on the surface of pathogens: C1QA, together with C1QB and C1QC, specifically recognizes and binds the Fc regions of IgG or IgM via its C1q domain. Immunoglobulin-binding activates the proenzyme C1R, which cleaves C1S, initiating the proteolytic cascade of the complement system. The C1Q subcomplex is activated by a hexamer of IgG complexed with antigens, while it is activated by a pentameric IgM. The C1Q subcomplex also recognizes and binds phosphatidylserine exposed on the surface of cells undergoing programmed cell death, possibly promoting activation of the complement system. This chain is Complement C1q subcomponent subunit A, found in Homo sapiens (Human).